We begin with the raw amino-acid sequence, 171 residues long: 3-hydroxydecanoyl-[acyl-carrier-protein] dehydratase (171 aa).

Residue histidine 70 is part of the active site.

Belongs to the thioester dehydratase family. FabA subfamily. In terms of assembly, homodimer.

Its subcellular location is the cytoplasm. The enzyme catalyses a (3R)-hydroxyacyl-[ACP] = a (2E)-enoyl-[ACP] + H2O. The catalysed reaction is (3R)-hydroxydecanoyl-[ACP] = (2E)-decenoyl-[ACP] + H2O. It catalyses the reaction (2E)-decenoyl-[ACP] = (3Z)-decenoyl-[ACP]. The protein operates within lipid metabolism; fatty acid biosynthesis. Its function is as follows. Necessary for the introduction of cis unsaturation into fatty acids. Catalyzes the dehydration of (3R)-3-hydroxydecanoyl-ACP to E-(2)-decenoyl-ACP and then its isomerization to Z-(3)-decenoyl-ACP. Can catalyze the dehydratase reaction for beta-hydroxyacyl-ACPs with saturated chain lengths up to 16:0, being most active on intermediate chain length. The protein is 3-hydroxydecanoyl-[acyl-carrier-protein] dehydratase of Vibrio campbellii (strain ATCC BAA-1116).